A 255-amino-acid chain; its full sequence is Geranylgeranylglyceryl phosphate synthase (255 aa).

D34 and T64 together coordinate Mg(2+). Sn-glycerol 1-phosphate-binding positions include 182 to 188 (YLEAGSG), 213 to 214 (GG), and 235 to 236 (GN).

This sequence belongs to the GGGP/HepGP synthase family. Group II subfamily. Requires Mg(2+) as cofactor.

It localises to the cytoplasm. The catalysed reaction is sn-glycerol 1-phosphate + (2E,6E,10E)-geranylgeranyl diphosphate = sn-3-O-(geranylgeranyl)glycerol 1-phosphate + diphosphate. The protein operates within membrane lipid metabolism; glycerophospholipid metabolism. Prenyltransferase that catalyzes the transfer of the geranylgeranyl moiety of geranylgeranyl diphosphate (GGPP) to the C3 hydroxyl of sn-glycerol-1-phosphate (G1P). This reaction is the first ether-bond-formation step in the biosynthesis of archaeal membrane lipids. In Saccharolobus solfataricus (strain ATCC 35092 / DSM 1617 / JCM 11322 / P2) (Sulfolobus solfataricus), this protein is Geranylgeranylglyceryl phosphate synthase.